The primary structure comprises 139 residues: ATP synthase epsilon chain (139 aa).

This sequence belongs to the ATPase epsilon chain family. As to quaternary structure, F-type ATPases have 2 components, CF(1) - the catalytic core - and CF(0) - the membrane proton channel. CF(1) has five subunits: alpha(3), beta(3), gamma(1), delta(1), epsilon(1). CF(0) has three main subunits: a, b and c.

It is found in the cell inner membrane. Its function is as follows. Produces ATP from ADP in the presence of a proton gradient across the membrane. The polypeptide is ATP synthase epsilon chain (Enterobacter sp. (strain 638)).